A 141-amino-acid polypeptide reads, in one-letter code: Small ribosomal subunit protein bS16 (141 aa).

A disordered region spans residues 84 to 141; it reads TRKARSNPEKSKPKAKAQERLEAARMAEEEAAAAAKAAAEAPAEEAPAAEAPAEEAQA. Positions 89–111 are enriched in basic and acidic residues; that stretch reads SNPEKSKPKAKAQERLEAARMAE. Low complexity predominate over residues 115-141; the sequence is AAAAKAAAEAPAEEAPAAEAPAEEAQA.

Belongs to the bacterial ribosomal protein bS16 family.

In Parvibaculum lavamentivorans (strain DS-1 / DSM 13023 / NCIMB 13966), this protein is Small ribosomal subunit protein bS16.